We begin with the raw amino-acid sequence, 359 residues long: Protein Wnt-5a (359 aa).

Positions 1–20 (MATTHLTAALALLCALLQVD) are cleaved as a signal peptide. C83 and C94 are disulfide-bonded. N93 and N99 each carry an N-linked (GlcNAc...) asparagine glycan. 10 disulfide bridges follow: C133-C141, C143-C161, C217-C231, C219-C226, C288-C319, C304-C314, C318-C358, C334-C349, C336-C346, and C341-C342. Residue S223 is the site of O-palmitoleoyl serine; by PORCN attachment. N-linked (GlcNAc...) asparagine glycosylation is found at N291 and N305.

Belongs to the Wnt family. In terms of processing, palmitoleoylation is required for efficient binding to frizzled receptors. Depalmitoleoylation leads to Wnt signaling pathway inhibition. Neuroectodermal and non-neuroectodermal tissues.

The protein resides in the secreted. The protein localises to the extracellular space. It is found in the extracellular matrix. Ligand for members of the frizzled family of seven transmembrane receptors. Can activate or inhibit canonical Wnt signaling, depending on receptor context. Required during embryogenesis for extension of the primary anterior-posterior axis. This is Protein Wnt-5a (WNT-5A) from Ambystoma mexicanum (Axolotl).